Reading from the N-terminus, the 217-residue chain is Flagellar L-ring protein 2 (217 aa).

The first 15 residues, 1–15 (MRILLALTWLAWLGA), serve as a signal peptide directing secretion. Cys16 carries the N-palmitoyl cysteine lipid modification. Cys16 carries the S-diacylglycerol cysteine lipid modification.

It belongs to the FlgH family. The basal body constitutes a major portion of the flagellar organelle and consists of four rings (L,P,S, and M) mounted on a central rod.

Its subcellular location is the cell outer membrane. It is found in the bacterial flagellum basal body. Assembles around the rod to form the L-ring and probably protects the motor/basal body from shearing forces during rotation. The polypeptide is Flagellar L-ring protein 2 (Burkholderia thailandensis (strain ATCC 700388 / DSM 13276 / CCUG 48851 / CIP 106301 / E264)).